The sequence spans 471 residues: UDP-N-acetylmuramate--L-alanine ligase (471 aa).

114-120 (GTHGKTT) contributes to the ATP binding site.

It belongs to the MurCDEF family.

Its subcellular location is the cytoplasm. It carries out the reaction UDP-N-acetyl-alpha-D-muramate + L-alanine + ATP = UDP-N-acetyl-alpha-D-muramoyl-L-alanine + ADP + phosphate + H(+). It participates in cell wall biogenesis; peptidoglycan biosynthesis. Functionally, cell wall formation. The sequence is that of UDP-N-acetylmuramate--L-alanine ligase from Agrobacterium fabrum (strain C58 / ATCC 33970) (Agrobacterium tumefaciens (strain C58)).